The chain runs to 504 residues: MVNIRPDEISSIIRQQIEKYDQDVEVANIGTVLQVGDGIARVYGLDEVMAGELLEFEDKTIGVALNLESDNVGVVLMGDGRDILEGSSVKGTGRIAQIPVGDAFLGRVVDPLARPIDDKGEPASNGTRLIESMAPGIIGRQSVCEPMQTGITAIDSMIPIGRGQRELIIGDRQTGKTAVALDTIINQKGQDVVCVYVAIGQKASSVAQVVSSLQDKGALDYTIIVAANADSPATLQYIAPYTGAALAEYFMYKGKATLVIYDDLTKQAQAYRQMSLLLRRPPGREAYPGDVFYLHSRLLERAAKLNAELGGGSMTALPIIETQAGDVSAYIPTNVISITDGQIFLSGDLFNSGIRPAINVGISVSRVGSAAQIKAMKQVAGKLKLELAQFAELEAFSQFASDLDKATQNQLARGQRLREILKQAQNSPIPVEEQTAIIYTGINGYLDDIEVSKVAEFIRELREDLKNSKPEFGENVRSTKKLEPVSEELLKRAIEDVKQGFDKA.

Residue 170-177 (GDRQTGKT) coordinates ATP.

It belongs to the ATPase alpha/beta chains family. In terms of assembly, F-type ATPases have 2 components, CF(1) - the catalytic core - and CF(0) - the membrane proton channel. CF(1) has five subunits: alpha(3), beta(3), gamma(1), delta(1), epsilon(1). CF(0) has four main subunits: a, b, b' and c.

It localises to the plastid. The protein resides in the chloroplast thylakoid membrane. It carries out the reaction ATP + H2O + 4 H(+)(in) = ADP + phosphate + 5 H(+)(out). Its function is as follows. Produces ATP from ADP in the presence of a proton gradient across the membrane. The alpha chain is a regulatory subunit. The protein is ATP synthase subunit alpha, chloroplastic of Pyropia yezoensis (Susabi-nori).